A 148-amino-acid polypeptide reads, in one-letter code: Lipoprotein MlpA (148 aa).

The N-terminal stretch at 1-17 (MKIINILFCLFLLLLNS) is a signal peptide. The N-palmitoyl cysteine moiety is linked to residue Cys18. Cys18 carries S-diacylglycerol cysteine lipidation. Residues 26–58 (LKNNAQQTKSRGKRDLTQKEATPEKPKSKEELL) are disordered. Residues 38–58 (KRDLTQKEATPEKPKSKEELL) are compositionally biased toward basic and acidic residues.

This sequence belongs to the Multicopy lipoprotein (Mlp) family.

The protein resides in the cell outer membrane. An outer membrane protein that may participate in pathogenesis. Some human Lyme disease patients have antibodies against this protein. The Mlp proteins probably undergo intragenic recombination, generating new alleles. This is Lipoprotein MlpA (mlpA) from Borreliella burgdorferi (strain ATCC 35210 / DSM 4680 / CIP 102532 / B31) (Borrelia burgdorferi).